Consider the following 141-residue polypeptide: Putative pre-16S rRNA nuclease (141 aa).

The protein belongs to the YqgF nuclease family.

Its subcellular location is the cytoplasm. In terms of biological role, could be a nuclease involved in processing of the 5'-end of pre-16S rRNA. The sequence is that of Putative pre-16S rRNA nuclease from Aliivibrio salmonicida (strain LFI1238) (Vibrio salmonicida (strain LFI1238)).